We begin with the raw amino-acid sequence, 245 residues long: 1-(5-phosphoribosyl)-5-[(5-phosphoribosylamino)methylideneamino] imidazole-4-carboxamide isomerase (245 aa).

The active-site Proton acceptor is Asp8. Catalysis depends on Asp130, which acts as the Proton donor.

Belongs to the HisA/HisF family.

It is found in the cytoplasm. The enzyme catalyses 1-(5-phospho-beta-D-ribosyl)-5-[(5-phospho-beta-D-ribosylamino)methylideneamino]imidazole-4-carboxamide = 5-[(5-phospho-1-deoxy-D-ribulos-1-ylimino)methylamino]-1-(5-phospho-beta-D-ribosyl)imidazole-4-carboxamide. It participates in amino-acid biosynthesis; L-histidine biosynthesis; L-histidine from 5-phospho-alpha-D-ribose 1-diphosphate: step 4/9. This Pseudomonas aeruginosa (strain LESB58) protein is 1-(5-phosphoribosyl)-5-[(5-phosphoribosylamino)methylideneamino] imidazole-4-carboxamide isomerase.